Consider the following 936-residue polypeptide: Protocadherin gamma-A10 (936 aa).

Positions 1–32 (MAAQRNRSKESKDCSGLVLLCLFFGIPWEAGA) are cleaved as a signal peptide. Cadherin domains lie at 33-137 (RQIS…APTF), 138-246 (QAEN…APVF), 247-351 (TLPE…SPEL), 352-456 (TITS…PPTF), 457-566 (SQVS…APEI), and 574-687 (DGST…SPAN). The Extracellular portion of the chain corresponds to 33–696 (RQISYSIPEE…NSETSDLTLY (664 aa)). A glycan (N-linked (GlcNAc...) asparagine) is linked at asparagine 51. N-linked (GlcNAc...) asparagine glycans are attached at residues asparagine 423 and asparagine 549. Residues 697-717 (LVVAVAAVSCVFLAFVIVLLA) traverse the membrane as a helical segment. Topologically, residues 718–936 (LRLRRWHKSR…KKKSGKKEKK (219 aa)) are cytoplasmic. Disordered stretches follow at residues 801–845 (SKFP…WPNN) and 906–936 (ATLTNAAGKRDGKAPAGGNGNKKKSGKKEKK). Residues 820-845 (WRFSQAQRPGTSGSQNGDDTGTWPNN) show a composition bias toward polar residues. Residues 926 to 936 (NKKKSGKKEKK) are compositionally biased toward basic residues.

Its subcellular location is the cell membrane. Potential calcium-dependent cell-adhesion protein. May be involved in the establishment and maintenance of specific neuronal connections in the brain. This is Protocadherin gamma-A10 (PCDHGA10) from Pan troglodytes (Chimpanzee).